The primary structure comprises 86 residues: Toxin ICK-18 (86 aa).

Residues 1–19 form the signal peptide; it reads MKTIFALVFCCAIAVVVLG. 4 disulfide bridges follow: Cys-35–Cys-49, Cys-42–Cys-61, Cys-48–Cys-76, and Cys-79–Cys-86.

The protein belongs to the neurotoxin 21 family. In terms of tissue distribution, expressed by the venom gland.

Its subcellular location is the secreted. Functionally, probable neurotoxin with ion channel impairing activity. In Trittame loki (Brush-footed trapdoor spider), this protein is Toxin ICK-18.